The chain runs to 510 residues: Abscisic acid 8'-hydroxylase 2 (510 aa).

A helical membrane pass occupies residues 3 to 23 (FLLFFVFVTAAVLCFVVPAFL). Cysteine 441 is a heme binding site.

It belongs to the cytochrome P450 family. Heme serves as cofactor.

The protein resides in the membrane. It catalyses the reaction 2-cis-(+)-abscisate + reduced [NADPH--hemoprotein reductase] + O2 = (+)-8'-hydroxyabscisate + oxidized [NADPH--hemoprotein reductase] + H2O + H(+). It functions in the pathway plant hormone degradation; abscisic acid degradation. Functionally, involved in the oxidative degradation of abscisic acid. The polypeptide is Abscisic acid 8'-hydroxylase 2 (CYP707A6) (Oryza sativa subsp. japonica (Rice)).